The sequence spans 2434 residues: Protein Ycf2 (2434 aa).

1693–1700 contributes to the ATP binding site; sequence GPTETGRS.

Belongs to the Ycf2 family.

The protein localises to the plastid. The protein resides in the chloroplast stroma. Its function is as follows. Probable ATPase of unknown function. Its presence in a non-photosynthetic plant (Epifagus virginiana) and experiments in tobacco indicate that it has an essential function which is probably not related to photosynthesis. In Cycas taitungensis (Prince sago), this protein is Protein Ycf2.